The primary structure comprises 506 residues: Probable alpha-L-arabinofuranosidase B (506 aa).

An N-terminal signal peptide occupies residues 1-26 (MLLPRGFNRAVVTALGVVGTGTLVAA). The interval 27–343 (GPCDIYSSGG…ANIVAAKYAV (317 aa)) is catalytic. 3 disulfide bridges follow: C29-C39, C89-C94, and C184-C185. D227 contributes to the substrate binding site. The active-site Nucleophile is the E229. Position 230 (N230) interacts with substrate. N285 carries N-linked (GlcNAc...) asparagine glycosylation. G304 lines the substrate pocket. D305 functions as the Proton donor in the catalytic mechanism. Positions 344 to 506 (APLTSGPSLT…VSWVVSTSFA (163 aa)) are ABD. A glycan (N-linked (GlcNAc...) asparagine) is linked at N375. An intrachain disulfide couples C409 to C447. Substrate contacts are provided by H424, F427, D443, H471, L476, and D496.

The protein belongs to the glycosyl hydrolase 54 family.

The protein localises to the secreted. It carries out the reaction Hydrolysis of terminal non-reducing alpha-L-arabinofuranoside residues in alpha-L-arabinosides.. It participates in glycan metabolism; L-arabinan degradation. In terms of biological role, alpha-L-arabinofuranosidase involved in the degradation of arabinoxylan, a major component of plant hemicellulose. Able to hydrolyze 1,5-, 1,3- and 1,2-alpha-linkages not only in L-arabinofuranosyl oligosaccharides, but also in polysaccharides containing terminal non-reducing L-arabinofuranoses in side chains, like L-arabinan, arabinogalactan and arabinoxylan. This is Probable alpha-L-arabinofuranosidase B (abfB) from Aspergillus terreus (strain NIH 2624 / FGSC A1156).